We begin with the raw amino-acid sequence, 100 residues long: Thioredoxin (100 aa).

The region spanning 1 to 100 is the Thioredoxin domain; it reads MKHITNKAEL…PKNELKELLK (100 aa). A disulfide bridge connects residues Cys29 and Cys32.

It belongs to the thioredoxin family.

Its function is as follows. Participates in various redox reactions through the reversible oxidation of its active center dithiol to a disulfide and catalyzes dithiol-disulfide exchange reactions. The chain is Thioredoxin (trxA) from Mycoplasmoides gallisepticum (strain R(low / passage 15 / clone 2)) (Mycoplasma gallisepticum).